The primary structure comprises 326 residues: Phospho-N-acetylmuramoyl-pentapeptide-transferase (326 aa).

Transmembrane regions (helical) follow at residues 13-33 (ILAPLIMGFLFSIVLGPIFIP), 57-77 (GTPTMGGLIFFIATATAILIM), 85-105 (EMILLYSFLAFGFIGFLDDIL), 121-141 (MILLVLFSVALAWYGYTNVGT), 155-175 (NLGILYIPFIVVYYAAVTNAV), 181-201 (IDGLATSVTVIVLTFFAIIGF), 208-228 (VAVFAIALAGALLGFLKFNAF), 232-252 (IFMGDTGSLALGGVIGTIALM), 257-277 (LFVIIVGGIYLIETLSVIIQV), and 305-325 (VKIVTIFSSITAILCIIGFVA).

The protein belongs to the glycosyltransferase 4 family. MraY subfamily. It depends on Mg(2+) as a cofactor.

It localises to the cell membrane. It carries out the reaction UDP-N-acetyl-alpha-D-muramoyl-L-alanyl-gamma-D-glutamyl-meso-2,6-diaminopimeloyl-D-alanyl-D-alanine + di-trans,octa-cis-undecaprenyl phosphate = di-trans,octa-cis-undecaprenyl diphospho-N-acetyl-alpha-D-muramoyl-L-alanyl-D-glutamyl-meso-2,6-diaminopimeloyl-D-alanyl-D-alanine + UMP. It functions in the pathway cell wall biogenesis; peptidoglycan biosynthesis. Catalyzes the initial step of the lipid cycle reactions in the biosynthesis of the cell wall peptidoglycan: transfers peptidoglycan precursor phospho-MurNAc-pentapeptide from UDP-MurNAc-pentapeptide onto the lipid carrier undecaprenyl phosphate, yielding undecaprenyl-pyrophosphoryl-MurNAc-pentapeptide, known as lipid I. In Clostridium beijerinckii (strain ATCC 51743 / NCIMB 8052) (Clostridium acetobutylicum), this protein is Phospho-N-acetylmuramoyl-pentapeptide-transferase.